The sequence spans 312 residues: Transcriptional regulator protein Pur-beta (312 aa).

The disordered stretch occupies residues 1–32 (MADGDSGSERGGGGGPCGFQPASRGGGEQETQ). N-acetylalanine is present on A2. S6 and S8 each carry phosphoserine. R24 bears the Omega-N-methylarginine mark. The DNA-binding stretch occupies residues 28–254 (EQETQELASK…LRVSEVKPSY (227 aa)). At T31 the chain carries Phosphothreonine. S101 bears the Phosphoserine mark. R152 bears the Omega-N-methylarginine mark. K267 is subject to N6-acetyllysine. Residues 284–295 (ERQRDKLYERRG) show a composition bias toward basic and acidic residues. The tract at residues 284-312 (ERQRDKLYERRGGGSGGGEESEGEEVDED) is disordered. At R294 the chain carries Omega-N-methylarginine. A phosphoserine mark is found at S298 and S304. Acidic residues predominate over residues 302 to 312 (EESEGEEVDED).

Belongs to the PUR DNA-binding protein family. In terms of assembly, homodimer, heterodimer with PURA and heterotrimer with PURA and YBX1/Y-box protein 1. Interacts with MYOCD and SRF. As to expression, expressed in myocardium of heart failure patients.

It localises to the nucleus. In terms of biological role, transcriptional regulator which can act as an activator or a repressor. Represses the transcription of ACTA2 in fibroblasts and smooth muscle cells via its ability to interact with the purine-rich strand of a MCAT- containing element in the 5' flanking region of the gene. Represses the transcription of MYOCD, capable of repressing all isoforms of MYOCD but the magnitude of the repressive effects is most notable for the SMC- specific isoforms. Promotes hepatic glucose production by activating the transcription of ADCY6, leading to cAMP accumulation, increased PKA activity, CREB activation, and increased transcription of PCK1 and G6PC genes. Has capacity to bind repeated elements in single-stranded DNA such as the purine-rich single strand of the PUR element located upstream of the MYC gene. Participates in transcriptional and translational regulation of alpha-MHC expression in cardiac myocytes by binding to the purine-rich negative regulatory (PNR) element Modulates constitutive liver galectin-3 gene transcription by binding to its promoter. May play a role in the dendritic transport of a subset of mRNAs. In Homo sapiens (Human), this protein is Transcriptional regulator protein Pur-beta (PURB).